The chain runs to 1642 residues: Cholesterol transporter ABCA5 (1642 aa).

A helical membrane pass occupies residues Ser-32–Met-52. A glycan (N-linked (GlcNAc...) asparagine) is linked at Asn-86. The next 5 membrane-spanning stretches (helical) occupy residues Val-220 to Ile-240, Leu-264 to Ile-284, Ile-297 to Leu-317, Gly-328 to Ile-348, and Leu-355 to Met-375. Residue Asn-388 is glycosylated (N-linked (GlcNAc...) asparagine). The chain crosses the membrane as a helical span at residues Leu-396–Tyr-416. Asn-458 carries an N-linked (GlcNAc...) asparagine glycan. Residues Ile-478 to Tyr-713 enclose the ABC transporter 1 domain. ATP is bound at residue Gly-514 to Ser-521. Residues Ala-864–His-884 form a helical membrane-spanning segment. Asn-919 carries an N-linked (GlcNAc...) asparagine glycan. The chain crosses the membrane as a helical span at residues Val-967–Ile-987. Asn-996 carries N-linked (GlcNAc...) asparagine glycosylation. 6 consecutive transmembrane segments (helical) span residues Leu-1021–Met-1041, Val-1071–Phe-1091, Phe-1102–Ile-1122, Ser-1138–Leu-1158, Ala-1164–Ile-1184, and Leu-1207–His-1227. In terms of domain architecture, ABC transporter 2 spans Ile-1290–Lys-1533. Gly-1333–Ser-1340 provides a ligand contact to ATP.

Belongs to the ABC transporter superfamily. ABCA family. Post-translationally, N-glycosylated. As to expression, expressed in cardiomyocytes, oligodendrocytes and astrocytes in brain, alveolar type 2 cells in lung and follicular cells in the thyroid gland (at protein level). Detected in brain, testis, lung, heart, liver, kidney, skeletal muscle and placenta. Strongly expressed in the basal cells of the seminiferous tubules, interstitial cells consisting of Leydig cells, as well as the tunica albuginea. In the epididymis, specifically and very strongly expressed in the connective tissue outlining the cylindrical epithelium in the corpus and cauda regions, including fibrocytes and smooth muscle cells, as well as within the basal and tall columnar cells of the corpus cylindrical epithelium. Highly expressed in the brain with high expression in cortical and hippocampal neurons and moderately in the lung.

It localises to the golgi apparatus membrane. The protein localises to the lysosome membrane. It is found in the late endosome membrane. Its subcellular location is the cell membrane. The catalysed reaction is cholesterol(in) + ATP + H2O = cholesterol(out) + ADP + phosphate + H(+). Functionally, cholesterol efflux transporter in macrophages that is responsible for APOAI/high-density lipoproteins (HDL) formation at the plasma membrane under high cholesterol levels and participates in reverse cholesterol transport. May play a role in the processing of autolysosomes. The polypeptide is Cholesterol transporter ABCA5 (Mus musculus (Mouse)).